The chain runs to 446 residues: Putative diacyglycerol O-acyltransferase Rv3371 (446 aa).

H129 serves as the catalytic Proton acceptor. The disordered stretch occupies residues 425 to 446 (SRALPSAARRGRPSVPTARARH).

It belongs to the long-chain O-acyltransferase family.

It catalyses the reaction an acyl-CoA + a 1,2-diacyl-sn-glycerol = a triacyl-sn-glycerol + CoA. It carries out the reaction di-(9Z)-octadecenoylglycerol + (9Z)-octadecenoyl-CoA = 1,2,3-tri-(9Z-octadecenoyl)-glycerol + CoA. Its pathway is glycerolipid metabolism; triacylglycerol biosynthesis. Catalyzes the terminal and only committed step in triacylglycerol synthesis by using diacylglycerol and fatty acyl CoA as substrates. Required for storage lipid synthesis. Functionally, upon expression in E.coli functions weakly as a triacylglycerol synthase, making triacylglycerol (TG) from diolein and long-chain fatty acyl-CoA. Has no wax synthase activity to produce wax esters. This Mycobacterium tuberculosis (strain ATCC 25618 / H37Rv) protein is Putative diacyglycerol O-acyltransferase Rv3371.